We begin with the raw amino-acid sequence, 339 residues long: Glyoxylate reductase (339 aa).

NADP(+) contacts are provided by residues 157–160 and 239–241; these read LGRI and TAR. Residues R241 and E270 contribute to the active site. The Proton donor role is filled by H289. 289–291 contacts NADP(+); the sequence is HIA.

Belongs to the D-isomer specific 2-hydroxyacid dehydrogenase family. GyaR subfamily. As to quaternary structure, homodimer.

Its subcellular location is the cytoplasm. It carries out the reaction glycolate + NAD(+) = glyoxylate + NADH + H(+). This chain is Glyoxylate reductase, found in Thermofilum pendens (strain DSM 2475 / Hrk 5).